An 802-amino-acid chain; its full sequence is Putative flavin carrier protein 3 (802 aa).

A signal peptide spans Met-1 to Ala-28. The Lumenal portion of the chain corresponds to Lys-29–Gln-169. The N-linked (GlcNAc...) asparagine glycan is linked to Asn-149. The helical transmembrane segment at Ile-170–Leu-190 threads the bilayer. The Cytoplasmic portion of the chain corresponds to Ser-191–Ser-200. A helical transmembrane segment spans residues His-201–Met-221. At Gln-222–Pro-229 the chain is on the lumenal side. A helical membrane pass occupies residues Ile-230 to Met-250. Residues Gln-251–Arg-255 lie on the Cytoplasmic side of the membrane. The helical transmembrane segment at Trp-256–Ala-278 threads the bilayer. Topologically, residues Gln-279 to Ser-323 are lumenal. Asn-321 carries an N-linked (GlcNAc...) asparagine glycan. Residues Ile-324–Ile-344 form a helical membrane-spanning segment. Residues Val-345 to Gly-377 lie on the Cytoplasmic side of the membrane. A helical membrane pass occupies residues Ala-378–Phe-398. Over Thr-399–Ala-405 the chain is Lumenal. A helical membrane pass occupies residues Val-406 to Trp-426. Over Arg-427 to His-467 the chain is Cytoplasmic. The chain crosses the membrane as a helical span at residues Tyr-468–Ala-488. Over Gln-489–Gln-495 the chain is Lumenal. A helical transmembrane segment spans residues Val-496 to Tyr-516. Residues Leu-517–Asn-525 lie on the Cytoplasmic side of the membrane. Residues Ile-526–Phe-546 traverse the membrane as a helical segment. Asn-547 carries an N-linked (GlcNAc...) asparagine glycan. Residues Asn-547–Gly-557 lie on the Lumenal side of the membrane. The helical transmembrane segment at Trp-558–Phe-578 threads the bilayer. Residues Ala-579–Met-802 lie on the Cytoplasmic side of the membrane. Residues Ser-616 and Ser-635 each carry the phosphoserine modification. Residues Lys-629 to Met-802 are disordered. Composition is skewed to polar residues over residues Asp-653 to Ser-663, Lys-697 to Gly-717, and Asp-761 to Gln-788. Ser-779 and Ser-782 each carry phosphoserine.

Belongs to the transient receptor potential (TRP) ion channel family.

The protein resides in the endoplasmic reticulum membrane. In terms of biological role, may be responsible for the transport of FAD into the endoplasmic reticulum lumen, where it is required for oxidative protein folding. This chain is Putative flavin carrier protein 3 (FLC3), found in Saccharomyces cerevisiae (strain ATCC 204508 / S288c) (Baker's yeast).